The chain runs to 183 residues: MLDLVAKKLFLTRGKGIHEDRLTSFEYALRDAGIAGTNLVLISSIFPPKAKLISRKEGLQQIKPGQILFTIYSKNQTNEPHRMCSASVGIAQPKDKDRYGYLSEYEAFGQTETQAGDYAEDIAAQMLASSLGIPFDVDKNWDEKRQQWKISGEIYKTQNITQQTRGDKDGKWTTVFAAAVLLV.

Serine 44 carries the post-translational modification Pyruvic acid (Ser).

Belongs to the PdaD family. Pyruvate serves as cofactor.

The catalysed reaction is L-arginine + H(+) = agmatine + CO2. This chain is Pyruvoyl-dependent arginine decarboxylase, found in Nitrosopumilus maritimus (strain SCM1).